A 99-amino-acid polypeptide reads, in one-letter code: Integration host factor subunit alpha (99 aa).

The protein belongs to the bacterial histone-like protein family. In terms of assembly, heterodimer of an alpha and a beta chain.

Functionally, this protein is one of the two subunits of integration host factor, a specific DNA-binding protein that functions in genetic recombination as well as in transcriptional and translational control. The protein is Integration host factor subunit alpha of Psychrobacter arcticus (strain DSM 17307 / VKM B-2377 / 273-4).